Reading from the N-terminus, the 149-residue chain is D-aminoacyl-tRNA deacylase (149 aa).

The Gly-cisPro motif, important for rejection of L-amino acids motif lies at 137–138 (GP).

This sequence belongs to the DTD family. In terms of assembly, homodimer.

It localises to the cytoplasm. It catalyses the reaction glycyl-tRNA(Ala) + H2O = tRNA(Ala) + glycine + H(+). It carries out the reaction a D-aminoacyl-tRNA + H2O = a tRNA + a D-alpha-amino acid + H(+). An aminoacyl-tRNA editing enzyme that deacylates mischarged D-aminoacyl-tRNAs. Also deacylates mischarged glycyl-tRNA(Ala), protecting cells against glycine mischarging by AlaRS. Acts via tRNA-based rather than protein-based catalysis; rejects L-amino acids rather than detecting D-amino acids in the active site. By recycling D-aminoacyl-tRNA to D-amino acids and free tRNA molecules, this enzyme counteracts the toxicity associated with the formation of D-aminoacyl-tRNA entities in vivo and helps enforce protein L-homochirality. This is D-aminoacyl-tRNA deacylase from Clostridium botulinum (strain Loch Maree / Type A3).